The chain runs to 300 residues: GTPase Era (300 aa).

The Era-type G domain occupies 8-176 (RCGYVAIVGR…ESLIASHLPE (169 aa)). The segment at 16 to 23 (GRPNVGKS) is G1. 16 to 23 (GRPNVGKS) contacts GTP. Positions 42–46 (QTTRH) are G2. The interval 63–66 (DTPG) is G3. Residues 63 to 67 (DTPGM) and 125 to 128 (NKTD) each bind GTP. A G4 region spans residues 125-128 (NKTD). The tract at residues 155–157 (ISA) is G5. In terms of domain architecture, KH type-2 spans 199–283 (VREKIMRQLG…MLNLWVKVKG (85 aa)).

This sequence belongs to the TRAFAC class TrmE-Era-EngA-EngB-Septin-like GTPase superfamily. Era GTPase family. As to quaternary structure, monomer.

The protein localises to the cytoplasm. It is found in the cell inner membrane. Its function is as follows. An essential GTPase that binds both GDP and GTP, with rapid nucleotide exchange. Plays a role in 16S rRNA processing and 30S ribosomal subunit biogenesis and possibly also in cell cycle regulation and energy metabolism. The chain is GTPase Era from Pseudomonas syringae pv. tomato (strain ATCC BAA-871 / DC3000).